A 216-amino-acid chain; its full sequence is Soluble inorganic pyrophosphatase 4 (216 aa).

Ser18 is subject to Phosphoserine. The substrate site is built by Lys66 and Arg80. Tyr88 (proton donor) is an active-site residue. A substrate-binding site is contributed by Tyr92. Residues Asp102, Asp107, and Asp139 each contribute to the Mg(2+) site. Substrate is bound at residue Tyr176.

This sequence belongs to the PPase family. As to quaternary structure, monomer. The cofactor is Mg(2+). As to expression, ubiquitous, excepted in pollen. Very low expression in cork, xylem and hypocotyls.

The protein localises to the cytoplasm. It carries out the reaction diphosphate + H2O = 2 phosphate + H(+). With respect to regulation, inhibited by Zn(2+), Ca(2+), Ba(2+), Fe(2+), Co(2+), Cu(2+), Eu(2+), Eu(3+) and Mn(2+). In terms of biological role, catalyzes the irreversible hydrolysis of pyrophosphate (PPi) to phosphate. The MgPPi(2-) complex binds to the enzyme only after a free Mg(2+) ion has bound. No activity with glycerol-3-phosphate, glucose-6-phosphate, p-nitrophenylphosphate, ADP, NADP(+), NAD(+),NADH, NADPH or phosphoribosyl pyrophosphate as substrates. This chain is Soluble inorganic pyrophosphatase 4, found in Arabidopsis thaliana (Mouse-ear cress).